The sequence spans 681 residues: Sodium/glucose cotransporter 4 (681 aa).

The Extracellular portion of the chain corresponds to 1–36; the sequence is MSKELAAMGPGASGDGVRTETAPHIALDSRVGLHAY. A helical transmembrane segment spans residues 37–57; sequence DISVVVIYFVFVIAVGIWSSI. Topologically, residues 58–75 are cytoplasmic; the sequence is RASRGTIGGYFLAGRSMS. Residues 76–98 traverse the membrane as a helical segment; it reads WWPIGASLMSSNVGSGLFIGLAG. Topologically, residues 99 to 114 are extracellular; the sequence is TGAAGGLAVGGFEWNA. A helical membrane pass occupies residues 115–135; the sequence is TWLLLALGWVFVPVYIAAGVV. The Cytoplasmic segment spans residues 136–157; the sequence is TMPQYLKKRFGGQRIQVYMSVL. Residues 158–178 form a helical membrane-spanning segment; that stretch reads SLILYIFTKISTDIFSGALFI. Residues 179–190 lie on the Extracellular side of the membrane; it reads QMALGWNLYLST. A helical transmembrane segment spans residues 191–211; the sequence is GILLVVTAVYTIAGGLMAVIY. The Cytoplasmic segment spans residues 212–217; the sequence is TDALQT. A helical transmembrane segment spans residues 218–238; sequence VIMVGGALVLMFLGFQDVGWY. Residues 239–275 lie on the Extracellular side of the membrane; it reads PGLEQRYRQAIPNVTVPNTTCHLPRPDAFHILRDPVS. Asn-251 carries N-linked (GlcNAc...) asparagine glycosylation. A helical membrane pass occupies residues 276–296; the sequence is GDIPWPGLIFGLTVLATWCWC. The Cytoplasmic portion of the chain corresponds to 297 to 317; it reads TDQVIVQRSLSAKSLSHAKGG. Residues 318–338 form a helical membrane-spanning segment; it reads SVLGGYLKILPMFFIVMPGMI. The Extracellular portion of the chain corresponds to 339–383; that stretch reads SRALFPDEVGCVDPDVCQRICGARVGCSNIAYPKLVMALMPVGLR. Residues 384–406 form a helical membrane-spanning segment; that stretch reads GLMIAVIMAALMSSLTSIFNSSS. Over 407-427 the chain is Cytoplasmic; that stretch reads TLFTIDVWQRFRRKSTEQELM. The helical transmembrane segment at 428 to 448 threads the bilayer; it reads VVGRVFVVFLVVISILWIPII. The Extracellular segment spans residues 449-459; that stretch reads QSSNSGQLFDY. Residues 460 to 480 form a helical membrane-spanning segment; the sequence is IQAVTSYLAPPITALFLLAIF. At 481 to 487 the chain is on the cytoplasmic side; the sequence is CKRVTEP. The helical transmembrane segment at 488–508 threads the bilayer; that stretch reads GAFWGLVFGLGVGLLRMILEF. Residues 509 to 530 lie on the Extracellular side of the membrane; it reads SYPAPACGEVDRRPAVLKDFHY. A helical transmembrane segment spans residues 531–551; sequence LYFAILLCGLTAIVIVIVSLC. Residues 552 to 660 lie on the Cytoplasmic side of the membrane; sequence TTPIPEEQLT…SIEEEPLWRH (109 aa). The segment covering 579–591 has biased composition (basic and acidic residues); that stretch reads AHESTPEISERPA. The segment at 579–614 is disordered; the sequence is AHESTPEISERPAGECPAGGGAAENSSLGQEQPEAP. Phosphoserine is present on residues Ser-604 and Ser-605. Residues 661 to 681 form a helical membrane-spanning segment; sequence VCNINAVLLLAINIFLWGYFA.

Belongs to the sodium:solute symporter (SSF) (TC 2.A.21) family. In terms of tissue distribution, expressed in the small intestine, kidney and liver.

The protein localises to the cell membrane. It catalyses the reaction D-mannose(out) + n Na(+)(out) = D-mannose(in) + n Na(+)(in). In terms of biological role, electrogenic Na(+)-coupled sugar symporter that may play a primary role in D-mannose and possibly D-fructose and D-glucose transport at the plasma membrane. Transporter activity is driven by a transmembrane Na(+) electrochemical gradient set by the Na(+)/K(+) pump. Exclusively recognizes sugar substrates having a pyranose ring with an axial hydroxyl group on carbon 2. The sequence is that of Sodium/glucose cotransporter 4 from Homo sapiens (Human).